The chain runs to 697 residues: Probable potassium transporter 4 (697 aa).

Residues 1 to 29 lie on the Cytoplasmic side of the membrane; the sequence is MSSSHTVTVSMDVEAGQKNKDKKGISQDL. Residues 30-50 traverse the membrane as a helical segment; it reads ILAYKTLGVVFGGLVTSPLYV. The Extracellular segment spans residues 51 to 66; that stretch reads YPSMNLTNPTEEDYLG. N-linked (GlcNAc...) asparagine glycosylation occurs at Asn-55. A helical membrane pass occupies residues 67–87; it reads IYSIMFWTLTLIGVVKYICIA. Over 88-152 the chain is Cytoplasmic; sequence LNADDHGEGG…FIESSIIARR (65 aa). A helical transmembrane segment spans residues 153 to 173; it reads LLLLTAILGMCMLIGDGILTP. Topologically, residues 174–189 are extracellular; that stretch reads AISVLSAIDGLRGPFP. A helical membrane pass occupies residues 190–210; sequence SVSKPAVEGLSAAILVGLFLL. The Cytoplasmic segment spans residues 211–217; the sequence is QKYGTSK. The helical transmembrane segment at 218 to 238 threads the bilayer; that stretch reads VSFMFSPIMAAWTFATPVIGV. Residues 239–271 are Extracellular-facing; sequence YSIWRYYPGIFKAMSPHYIVRFFMTNQTRGWQL. A glycan (N-linked (GlcNAc...) asparagine) is linked at Asn-264. A helical membrane pass occupies residues 272 to 292; it reads LGGTVLCITGAEAMFADLGHF. The Cytoplasmic portion of the chain corresponds to 293–300; sequence SKRSIQIA. The helical transmembrane segment at 301 to 321 threads the bilayer; sequence FMSSIYPSLVLTYAGQTAYLI. At 322 to 338 the chain is on the extracellular side; it reads NNVDDFSDGFYKFVPRP. The helical transmembrane segment at 339–359 threads the bilayer; that stretch reads VYWPMFIIATLAAIVASQSLI. At 360–390 the chain is on the cytoplasmic side; that stretch reads SATFSVIKQSVVLDYFPRVKVVHTSKDKEGE. A helical membrane pass occupies residues 391 to 411; that stretch reads VYSPETNYMLMLLCVGVILGF. The Extracellular segment spans residues 412–422; the sequence is GDGKDIGNAFG. Residues 423–443 form a helical membrane-spanning segment; the sequence is VVVILVMLITTILLTLVMLII. The Cytoplasmic portion of the chain corresponds to 444-447; the sequence is WGTH. Residues 448 to 468 traverse the membrane as a helical segment; the sequence is VVLVALYLVPFLLLEATYVSA. Residues 469–475 are Extracellular-facing; it reads VCTKILR. A helical membrane pass occupies residues 476-496; that stretch reads GGWVPFAVSVALAAVMFGWYY. The Cytoplasmic segment spans residues 497-697; it reads GRQRKTEYEA…RVEIGMLYKA (201 aa).

It belongs to the HAK/KUP transporter (TC 2.A.72.3) family.

It localises to the membrane. Functionally, high-affinity potassium transporter. The sequence is that of Probable potassium transporter 4 (HAK4) from Oryza sativa subsp. japonica (Rice).